The primary structure comprises 242 residues: Outer membrane protein class 4 (242 aa).

Residues 1-22 (MTKQLKLSALFVALLASGTAVA) form the signal peptide. 7 repeat units span residues 69-70 (AP), 71-72 (EP), 73-74 (EP), 75-76 (EP), 77-78 (EP), 79-80 (AP), and 81-82 (AP). The segment at 69–82 (APEPEPEPEPAPAP) is 7 X 2 AA tandem repeats of X-P. Positions 92 to 229 (YVDETISLSA…RVDVKIRSIV (138 aa)) constitute an OmpA-like domain. Cysteine 191 and cysteine 214 form a disulfide bridge.

The protein belongs to the outer membrane OOP (TC 1.B.6) superfamily. As to quaternary structure, the C-terminus exists in a monomer-dimer equilibrium.

The protein resides in the cell outer membrane. The chain is Outer membrane protein class 4 from Neisseria meningitidis serogroup B (strain ATCC BAA-335 / MC58).